A 101-amino-acid polypeptide reads, in one-letter code: Small ribosomal subunit protein uS14 (101 aa).

Belongs to the universal ribosomal protein uS14 family. In terms of assembly, part of the 30S ribosomal subunit. Contacts proteins S3 and S10.

In terms of biological role, binds 16S rRNA, required for the assembly of 30S particles and may also be responsible for determining the conformation of the 16S rRNA at the A site. In Methylorubrum extorquens (strain PA1) (Methylobacterium extorquens), this protein is Small ribosomal subunit protein uS14.